The chain runs to 306 residues: Putative S-adenosyl-L-methionine-dependent methyltransferase Mvan_1345 (306 aa).

S-adenosyl-L-methionine contacts are provided by residues aspartate 134 and 163–164; that span reads DL.

This sequence belongs to the UPF0677 family.

Exhibits S-adenosyl-L-methionine-dependent methyltransferase activity. The chain is Putative S-adenosyl-L-methionine-dependent methyltransferase Mvan_1345 from Mycolicibacterium vanbaalenii (strain DSM 7251 / JCM 13017 / BCRC 16820 / KCTC 9966 / NRRL B-24157 / PYR-1) (Mycobacterium vanbaalenii).